Consider the following 470-residue polypeptide: Nuclear receptor ROR-beta (470 aa).

Positions 18–93 (VIPCKICGDK…LGMSRDAVKF (76 aa)) form a DNA-binding region, nuclear receptor. NR C4-type zinc fingers lie at residues 21 to 41 (CKIC…CEGC) and 57 to 81 (CPRQ…LQKC). The segment covering 104-117 (LYAEVQKHQQRLQE) has biased composition (basic and acidic residues). Residues 104–127 (LYAEVQKHQQRLQEQRQQQSGEAE) are disordered. The region spanning 222–460 (EIDRIAQNII…TLFPPLYKEL (239 aa)) is the NR LBD domain. Positions 456–461 (LYKELF) match the AF-2 motif.

It belongs to the nuclear hormone receptor family. NR1 subfamily. In terms of assembly, monomer. Interacts with CRX. In terms of tissue distribution, expressed in inner and outer neuroblastic layer as well as in the ganglion cell layer of the developing retina. Expressed in bone marrow osteoprogenitor cells.

It localises to the nucleus. Its subcellular location is the nucleoplasm. Nuclear receptor that binds DNA as a monomer to ROR response elements (RORE) containing a single core motif half-site 5'-AGGTCA-3' preceded by a short A-T-rich sequence. Considered to have intrinsic transcriptional activity, have some natural ligands such as all-trans retinoic acid (ATRA) and other retinoids which act as inverse agonists repressing the transcriptional activity. Required for normal postnatal development of rod and cone photoreceptor cells. Modulates rod photoreceptors differentiation at least by inducing the transcription factor NRL-mediated pathway. In cone photoreceptor cells, regulates transcription of OPN1SW. Involved in the regulation of the period length and stability of the circadian rhythm. May control cytoarchitectural patterning of neocortical neurons during development. May act in a dose-dependent manner to regulate barrel formation upon innervation of layer IV neurons by thalamocortical axons. May play a role in the suppression of osteoblastic differentiation through the inhibition of RUNX2 transcriptional activity. In terms of biological role, isoform 1 is critical for hindlimb motor control and for the differentiation of amacrine and horizontal cells in the retina. Regulates the expression of PTF1A synergistically with FOXN4. In Mus musculus (Mouse), this protein is Nuclear receptor ROR-beta (Rorb).